The primary structure comprises 354 residues: NADH-quinone oxidoreductase subunit H (354 aa).

8 consecutive transmembrane segments (helical) span residues 25 to 45 (LVRI…LILW), 91 to 111 (WVYL…WAVI), 126 to 146 (LLYA…AGWA), 170 to 190 (MGFA…SDIV), 205 to 225 (FLSW…VSGI), 257 to 277 (LFFL…SILF), 290 to 310 (FIPG…VFIW), and 330 to 350 (VFLP…MSPL).

Belongs to the complex I subunit 1 family. In terms of assembly, NDH-1 is composed of 14 different subunits. Subunits NuoA, H, J, K, L, M, N constitute the membrane sector of the complex.

The protein resides in the cell inner membrane. The catalysed reaction is a quinone + NADH + 5 H(+)(in) = a quinol + NAD(+) + 4 H(+)(out). Functionally, NDH-1 shuttles electrons from NADH, via FMN and iron-sulfur (Fe-S) centers, to quinones in the respiratory chain. The immediate electron acceptor for the enzyme in this species is believed to be ubiquinone. Couples the redox reaction to proton translocation (for every two electrons transferred, four hydrogen ions are translocated across the cytoplasmic membrane), and thus conserves the redox energy in a proton gradient. This subunit may bind ubiquinone. The protein is NADH-quinone oxidoreductase subunit H of Paraburkholderia phymatum (strain DSM 17167 / CIP 108236 / LMG 21445 / STM815) (Burkholderia phymatum).